The following is a 426-amino-acid chain: Adenylosuccinate synthetase (426 aa).

GTP is bound by residues 11–17 and 39–41; these read GDEGKGK and GHT. Asp12 serves as the catalytic Proton acceptor. Mg(2+) is bound by residues Asp12 and Gly39. IMP contacts are provided by residues 12–15, 37–40, Thr130, Arg144, Asn226, Thr241, and Arg305; these read DEGK and NAGH. His40 acts as the Proton donor in catalysis. 301–307 lines the substrate pocket; that stretch reads VTTGRKR. Residues Arg307, 333–335, and 415–417 each bind GTP; these read KLD and GTG.

The protein belongs to the adenylosuccinate synthetase family. As to quaternary structure, homodimer. Mg(2+) is required as a cofactor.

It localises to the cytoplasm. The catalysed reaction is IMP + L-aspartate + GTP = N(6)-(1,2-dicarboxyethyl)-AMP + GDP + phosphate + 2 H(+). Its pathway is purine metabolism; AMP biosynthesis via de novo pathway; AMP from IMP: step 1/2. Functionally, plays an important role in the de novo pathway and in the salvage pathway of purine nucleotide biosynthesis. Catalyzes the first committed step in the biosynthesis of AMP from IMP. The protein is Adenylosuccinate synthetase of Meyerozyma guilliermondii (strain ATCC 6260 / CBS 566 / DSM 6381 / JCM 1539 / NBRC 10279 / NRRL Y-324) (Yeast).